A 434-amino-acid chain; its full sequence is Methylenetetrahydrofolate--tRNA-(uracil-5-)-methyltransferase TrmFO (434 aa).

9 to 14 (GAGLAG) contributes to the FAD binding site.

This sequence belongs to the MnmG family. TrmFO subfamily. Requires FAD as cofactor.

The protein localises to the cytoplasm. It carries out the reaction uridine(54) in tRNA + (6R)-5,10-methylene-5,6,7,8-tetrahydrofolate + NADH + H(+) = 5-methyluridine(54) in tRNA + (6S)-5,6,7,8-tetrahydrofolate + NAD(+). It catalyses the reaction uridine(54) in tRNA + (6R)-5,10-methylene-5,6,7,8-tetrahydrofolate + NADPH + H(+) = 5-methyluridine(54) in tRNA + (6S)-5,6,7,8-tetrahydrofolate + NADP(+). Its function is as follows. Catalyzes the folate-dependent formation of 5-methyl-uridine at position 54 (M-5-U54) in all tRNAs. This is Methylenetetrahydrofolate--tRNA-(uracil-5-)-methyltransferase TrmFO from Listeria innocua serovar 6a (strain ATCC BAA-680 / CLIP 11262).